The sequence spans 418 residues: Secreted beta-glucosidase SUN41 (418 aa).

Residues 1–23 (MRFSQATVLAFAALSLAAPAFEA) form the signal peptide. Over residues 81–97 (SEETSSTSTSISSTTTI) the composition is skewed to low complexity. Residues 81-150 (SEETSSTSTS…SGSTNGIEGD (70 aa)) are disordered. N-linked (GlcNAc...) asparagine glycosylation occurs at Asn100. A compositionally biased stretch (polar residues) spans 112-126 (SLPSGTIKPSSFATE). Positions 127–136 (SQSQSQSSST) are enriched in low complexity.

This sequence belongs to the SUN family. Post-translationally, predicted to be a substrate for cleavage by KEX2.

It is found in the secreted. It localises to the cell wall. In terms of biological role, cell surface beta-glucosidase involved in cytokinesis, cell wall biogenesis, adhesion to host tissue, and biofilm formation; thus playing an important role in the host-pathogen interaction. Has hydrolytic activity on linear (1-&gt;3)-beta-D-glucans such as laminaribiose and other laminarioligosaccharides. This is Secreted beta-glucosidase SUN41 from Candida albicans (strain SC5314 / ATCC MYA-2876) (Yeast).